Reading from the N-terminus, the 2602-residue chain is Filamin-B (2602 aa).

Residues 1 to 239 (MPVTEKDLAE…VMTYLSQFPK (239 aa)) form an actin-binding region. Calponin-homology (CH) domains follow at residues 16-122 (KIQQ…LHYS) and 139-242 (QTPK…KAKL). Residue threonine 216 is modified to Phosphothreonine. A disordered region spans residues 244 to 267 (PGAPLKPKLNPKKARAYGRGIEPT). 15 Filamin repeats span residues 249-347 (KPKL…EVSV), 349-446 (KAQG…VVQV), 447-543 (GEAC…EVQV), 544-636 (GPEA…MAFI), 640-736 (TGGY…RVNI), 737-839 (GQGS…RVKV), 840-938 (DPSH…TVGV), 939-1034 (AAPL…TVEA), 1035-1127 (SLPP…KADI), 1128-1222 (EMPF…RVKV), 1223-1322 (EPAV…KVAV), 1323-1415 (TEGC…RVPV), 1416-1511 (KDVV…KVKV), 1512-1608 (LPTY…RIRA), and 1609-1704 (TQTG…TVMA). Threonine 519 carries the post-translational modification Phosphothreonine. Residue lysine 681 is modified to N6-acetyllysine. Serine 730 is subject to Phosphoserine. A phosphoserine mark is found at serine 886, serine 932, serine 983, and serine 1028. Residues 1128–1511 (EMPFDPSKVV…IPRSPFKVKV (384 aa)) form an interaction with FBLP1 region. Threonine 1307 carries the post-translational modification Phosphothreonine. Serine 1316 is modified (phosphoserine). A phosphoserine mark is found at serine 1433, asparagine 1474, serine 1505, and serine 1602. Residues 1705 to 1728 (TDGEVTAVEEAPVNACPPGFRPWV) are hinge 1. 8 Filamin repeats span residues 1729-1813 (TEEA…SPLQ), 1816-1908 (VNYP…TAKI), 1919-1994 (KLGS…SIMV), 1997-2089 (SEIG…TVKI), 2091-2185 (GEGR…QFTV), 2188-2280 (LGEG…LVPV), 2282-2375 (APSD…KVRV), and 2379-2471 (GQAG…KAKV). Lysine 1780 bears the N6-acetyllysine mark. The tract at residues 1862 to 2148 (SKAEISCIDN…RVTEAEIVPM (287 aa)) is interaction with the cytoplasmic tail of GP1BA. Positions 2060 to 2225 (SYFPTVPGVY…IWTREAGAGG (166 aa)) are interaction with FLNA 1. Residues serine 2083, serine 2107, and serine 2113 each carry the phosphoserine modification. Residues 2130–2602 (SAHVTSPSGR…PGSPFHVTVP (473 aa)) are interaction with INPPL1. Phosphoserine occurs at positions 2369 and 2465. A Glycyl lysine isopeptide (Lys-Gly) (interchain with G-Cter in ISG15) cross-link involves residue lysine 2468. A hinge 2 region spans residues 2472–2506 (TGQRLVSPGSANETSSILVESVTRSSTETCYSAIP). The segment at 2472-2602 (TGQRLVSPGS…PGSPFHVTVP (131 aa)) is self-association site, tail. Phosphoserine occurs at positions 2478, 2481, and 2492. A Filamin 24 repeat occupies 2507–2601 (KASSDASKVT…IPGSPFHVTV (95 aa)). Residues 2507 to 2602 (KASSDASKVT…PGSPFHVTVP (96 aa)) are interaction with FLNA 2. N6-succinyllysine occurs at positions 2518 and 2524. Residue lysine 2576 is modified to N6-acetyllysine.

This sequence belongs to the filamin family. In terms of assembly, homodimer. Interacts with MICALL2. Interacts with RFLNA and RFLNB. Isoform 1 interacts with FBLP1, FLNA, FLNC, GP1BA, INPPL1, ITGB1A, PSEN1 and PSEN2. Isoform 3 interacts with ITGB1A, ITGB1D, ITGB3 and ITGB6. Interacts with MYOT and MYOZ1. Interacts with HBV capsid protein. Interacts with ASB2 isoform 1; the interaction targets FLNB for proteasomal degradation. ISGylation prevents ability to interact with the upstream activators of the JNK cascade and inhibits IFNA-induced JNK signaling. Post-translationally, ubiquitination by a SCF-like complex containing ASB2 isoform 1 leads to proteasomal degradation which promotes muscle differentiation. In terms of tissue distribution, ubiquitous. Isoform 1 and isoform 2 are expressed in placenta, bone marrow, brain, umbilical vein endothelial cells (HUVEC), retina and skeletal muscle. Isoform 1 is predominantly expressed in prostate, uterus, liver, thyroid, stomach, lymph node, small intestine, spleen, skeletal muscle, kidney, placenta, pancreas, heart, lung, platelets, endothelial cells, megakaryocytic and erythroleukemic cell lines. Isoform 2 is predominantly expressed in spinal cord, platelet and Daudi cells. Also expressed in thyroid adenoma, neurofibrillary tangles (NFT), senile plaques in the hippocampus and cerebral cortex in Alzheimer disease (AD). Isoform 3 and isoform 6 are expressed predominantly in lung, heart, skeletal muscle, testis, spleen, thymus and leukocytes. Isoform 4 and isoform 5 are expressed in heart.

The protein resides in the cytoplasm. It localises to the cell cortex. It is found in the cytoskeleton. The protein localises to the stress fiber. Its subcellular location is the myofibril. The protein resides in the sarcomere. It localises to the z line. In terms of biological role, connects cell membrane constituents to the actin cytoskeleton. May promote orthogonal branching of actin filaments and links actin filaments to membrane glycoproteins. Anchors various transmembrane proteins to the actin cytoskeleton. Interaction with FLNA may allow neuroblast migration from the ventricular zone into the cortical plate. Various interactions and localizations of isoforms affect myotube morphology and myogenesis. Isoform 6 accelerates muscle differentiation in vitro. The polypeptide is Filamin-B (FLNB) (Homo sapiens (Human)).